We begin with the raw amino-acid sequence, 331 residues long: Nucleotide sugar transporter SLC35B4 (331 aa).

Transmembrane regions (helical) follow at residues 4-24 (AFAV…LELL), 30-50 (GCGN…GFLF), 59-79 (PAIP…VSVV), 92-112 (LHMI…IIIL), 124-144 (IALV…QVTV), 153-173 (GFQA…ALLM), 201-221 (ALPL…VVLF), 229-249 (VPVI…NVVT), 251-267 (YVCI…CTSL), 268-288 (TVTL…ILYF), and 294-314 (MWHW…TEVW). The Mediates endoplasmic reticulum retention motif lies at 326–331 (KDDKKD).

This sequence belongs to the nucleotide-sugar transporter family. SLC35B subfamily.

It is found in the endoplasmic reticulum membrane. It catalyses the reaction UDP-N-acetyl-alpha-D-glucosamine(in) + UDP-alpha-D-glucuronate(out) = UDP-N-acetyl-alpha-D-glucosamine(out) + UDP-alpha-D-glucuronate(in). The catalysed reaction is UDP-alpha-D-xylose(in) + UDP-alpha-D-glucuronate(out) = UDP-alpha-D-xylose(out) + UDP-alpha-D-glucuronate(in). Functionally, antiporter that transports nucleotide sugars across the endoplasmic reticulum (ER) membrane in exchange for another nucleotide sugar. May couple UDP-alpha-D-glucuronate (UDP-GlcA) or UDP-alpha-D-xylose (UDP-Xyl) efflux to UDP-alpha-D-glucuronate (UDP-GlcA) influx into the ER lumen, which in turn stimulates glucuronidation and excretion of endobiotics and xenobiotics. The chain is Nucleotide sugar transporter SLC35B4 (Slc35b4) from Mus musculus (Mouse).